We begin with the raw amino-acid sequence, 357 residues long: Histidine biosynthesis bifunctional protein HisB (357 aa).

Positions 1 to 167 (MNDKILFIDR…IHKYLMQNSH (167 aa)) are histidinol-phosphatase. Catalysis depends on Asp-9, which acts as the Nucleophile. Residues Asp-9 and Asp-11 each coordinate Mg(2+). Catalysis depends on Asp-11, which acts as the Proton donor. The Zn(2+) site is built by Cys-93, His-95, Cys-101, and Cys-103. Position 130 (Asp-130) interacts with Mg(2+). The interval 168–357 (RVAHIQRITN…QIPSSKGILL (190 aa)) is imidazoleglycerol-phosphate dehydratase.

It in the N-terminal section; belongs to the histidinol-phosphatase family. In the C-terminal section; belongs to the imidazoleglycerol-phosphate dehydratase family. Mg(2+) serves as cofactor. The cofactor is Zn(2+).

It is found in the cytoplasm. The catalysed reaction is D-erythro-1-(imidazol-4-yl)glycerol 3-phosphate = 3-(imidazol-4-yl)-2-oxopropyl phosphate + H2O. It carries out the reaction L-histidinol phosphate + H2O = L-histidinol + phosphate. Its pathway is amino-acid biosynthesis; L-histidine biosynthesis; L-histidine from 5-phospho-alpha-D-ribose 1-diphosphate: step 6/9. It participates in amino-acid biosynthesis; L-histidine biosynthesis; L-histidine from 5-phospho-alpha-D-ribose 1-diphosphate: step 8/9. In Blochmanniella floridana, this protein is Histidine biosynthesis bifunctional protein HisB.